The primary structure comprises 665 residues: Potassium-transporting ATPase ATP-binding subunit (665 aa).

The next 4 membrane-spanning stretches (helical) occupy residues M28 to F48, Y56 to M76, I207 to I227, and I244 to I264. Catalysis depends on D295, which acts as the 4-aspartylphosphate intermediate. Residues D332, E336, F364 to S371, and K382 contribute to the ATP site. Mg(2+)-binding residues include D501 and D505. A run of 3 helical transmembrane segments spans residues Y570–L590, I596–L616, and V644–V664.

This sequence belongs to the cation transport ATPase (P-type) (TC 3.A.3) family. Type IA subfamily. As to quaternary structure, the system is composed of three essential subunits: KdpA, KdpB and KdpC.

It localises to the cell membrane. The enzyme catalyses K(+)(out) + ATP + H2O = K(+)(in) + ADP + phosphate + H(+). Part of the high-affinity ATP-driven potassium transport (or Kdp) system, which catalyzes the hydrolysis of ATP coupled with the electrogenic transport of potassium into the cytoplasm. This subunit is responsible for energy coupling to the transport system and for the release of the potassium ions to the cytoplasm. The protein is Potassium-transporting ATPase ATP-binding subunit of Thermoplasma acidophilum (strain ATCC 25905 / DSM 1728 / JCM 9062 / NBRC 15155 / AMRC-C165).